Here is a 501-residue protein sequence, read N- to C-terminus: Cytochrome P450 7A1 (501 aa).

Residues 4–24 (IFWIWGICLSVCCCLWLILGL) traverse the membrane as a helical segment. Cysteine 441 lines the heme pocket.

This sequence belongs to the cytochrome P450 family. It depends on heme as a cofactor. In terms of tissue distribution, detected in liver.

Its subcellular location is the endoplasmic reticulum membrane. It is found in the microsome membrane. It catalyses the reaction cholesterol + reduced [NADPH--hemoprotein reductase] + O2 = 7alpha-hydroxycholesterol + oxidized [NADPH--hemoprotein reductase] + H2O + H(+). The catalysed reaction is 4beta-hydroxycholesterol + reduced [NADPH--hemoprotein reductase] + O2 = 4beta,7alpha-dihydroxycholesterol + oxidized [NADPH--hemoprotein reductase] + H2O + H(+). It carries out the reaction lathosterol + reduced [NADPH--hemoprotein reductase] + O2 = 7alpha,8alpha-epoxy-5alpha-cholestan-3beta-ol + oxidized [NADPH--hemoprotein reductase] + H2O + H(+). The enzyme catalyses lathosterol + reduced [NADPH--hemoprotein reductase] + O2 = 5alpha-cholestan-7-oxo-3beta-ol + oxidized [NADPH--hemoprotein reductase] + H2O + H(+). It catalyses the reaction 7-dehydrocholesterol + reduced [NADPH--hemoprotein reductase] + O2 = 7-oxocholesterol + oxidized [NADPH--hemoprotein reductase] + H2O + H(+). The catalysed reaction is (24S)-hydroxycholesterol + reduced [NADPH--hemoprotein reductase] + O2 = (24S)-7alpha-dihydroxycholesterol + oxidized [NADPH--hemoprotein reductase] + H2O + H(+). It carries out the reaction (24R)-hydroxycholesterol + reduced [NADPH--hemoprotein reductase] + O2 = (24R)-7alpha-dihydroxycholesterol + oxidized [NADPH--hemoprotein reductase] + H2O + H(+). The protein operates within lipid metabolism; bile acid biosynthesis. It participates in steroid metabolism; cholesterol degradation. Its function is as follows. A cytochrome P450 monooxygenase involved in the metabolism of endogenous cholesterol and its oxygenated derivatives (oxysterols). Mechanistically, uses molecular oxygen inserting one oxygen atom into a substrate, and reducing the second into a water molecule, with two electrons provided by NADPH via cytochrome P450 reductase (CPR; NADPH-ferrihemoprotein reductase). Functions as a critical regulatory enzyme of bile acid biosynthesis and cholesterol homeostasis. Catalyzes the hydroxylation of carbon hydrogen bond at 7-alpha position of cholesterol, a rate-limiting step in cholesterol catabolism and bile acid biosynthesis. 7-alpha hydroxylates several oxysterols, including 4beta-hydroxycholesterol and 24-hydroxycholesterol. Catalyzes the oxidation of the 7,8 double bond of 7-dehydrocholesterol and lathosterol with direct and predominant formation of the 7-keto derivatives. The protein is Cytochrome P450 7A1 (CYP7A1) of Oryctolagus cuniculus (Rabbit).